We begin with the raw amino-acid sequence, 378 residues long: Cell death-related nuclease 6 (378 aa).

A signal peptide spans 1–17 (MIRQIILIVSLIGISNA). 3 N-linked (GlcNAc...) asparagine glycosylation sites follow: Asn-51, Asn-92, and Asn-111.

Belongs to the DNase II family.

In terms of biological role, involved in apoptotic DNA degradation. The chain is Cell death-related nuclease 6 (crn-6) from Caenorhabditis elegans.